We begin with the raw amino-acid sequence, 389 residues long: Formate-dependent phosphoribosylglycinamide formyltransferase (389 aa).

N(1)-(5-phospho-beta-D-ribosyl)glycinamide is bound by residues 21–22 (EL) and glutamate 81. ATP-binding positions include arginine 113, lysine 154, 159-164 (SSGKGQ), 194-197 (EEFI), and glutamate 202. An ATP-grasp domain is found at 118–307 (RLAAEKLGLK…EFEIHVRAIL (190 aa)). The Mg(2+) site is built by glutamate 266 and glutamate 278. Residues aspartate 285, lysine 353, and 360–361 (RR) each bind N(1)-(5-phospho-beta-D-ribosyl)glycinamide.

It belongs to the PurK/PurT family. Homodimer.

The catalysed reaction is N(1)-(5-phospho-beta-D-ribosyl)glycinamide + formate + ATP = N(2)-formyl-N(1)-(5-phospho-beta-D-ribosyl)glycinamide + ADP + phosphate + H(+). The protein operates within purine metabolism; IMP biosynthesis via de novo pathway; N(2)-formyl-N(1)-(5-phospho-D-ribosyl)glycinamide from N(1)-(5-phospho-D-ribosyl)glycinamide (formate route): step 1/1. Involved in the de novo purine biosynthesis. Catalyzes the transfer of formate to 5-phospho-ribosyl-glycinamide (GAR), producing 5-phospho-ribosyl-N-formylglycinamide (FGAR). Formate is provided by PurU via hydrolysis of 10-formyl-tetrahydrofolate. The chain is Formate-dependent phosphoribosylglycinamide formyltransferase from Methanocaldococcus jannaschii (strain ATCC 43067 / DSM 2661 / JAL-1 / JCM 10045 / NBRC 100440) (Methanococcus jannaschii).